A 734-amino-acid polypeptide reads, in one-letter code: Elongation factor G, mitochondrial (734 aa).

The transit peptide at 1–32 directs the protein to the mitochondrion; sequence MTSFLTSRFGGLALRNVMNNKNGINSFGLRCF. The tr-type G domain occupies 38–318; it reads SGLRNIGISA…GVIKYLPSPN (281 aa). GTP-binding positions include 47–54, 114–118, and 168–171; these read AHIDSGKT, DTPGH, and NKLD.

The protein belongs to the TRAFAC class translation factor GTPase superfamily. Classic translation factor GTPase family. EF-G/EF-2 subfamily.

Its subcellular location is the mitochondrion. The catalysed reaction is GTP + H2O = GDP + phosphate + H(+). It functions in the pathway protein biosynthesis; polypeptide chain elongation. Mitochondrial GTPase that catalyzes the GTP-dependent ribosomal translocation step during translation elongation. During this step, the ribosome changes from the pre-translocational (PRE) to the post-translocational (POST) state as the newly formed A-site-bound peptidyl-tRNA and P-site-bound deacylated tRNA move to the P and E sites, respectively. Catalyzes the coordinated movement of the two tRNA molecules, the mRNA and conformational changes in the ribosome. The sequence is that of Elongation factor G, mitochondrial (gfm1) from Dictyostelium discoideum (Social amoeba).